Consider the following 260-residue polypeptide: Crotonyl-CoA hydratase (260 aa).

Catalysis depends on Glu114, which acts as the Nucleophile. Glu134 acts as the Proton acceptor in catalysis.

It belongs to the enoyl-CoA hydratase/isomerase family. As to quaternary structure, homotetramer.

It is found in the cytoplasm. It catalyses the reaction 3-hydroxybutanoyl-CoA = (2E)-butenoyl-CoA + H2O. It carries out the reaction a short-chain (3S)-3-hydroxyacyl-CoA = a short-chain (2E)-enoyl-CoA + H2O. The protein operates within lipid metabolism; butanoate metabolism. Its function is as follows. Involved in syntrophic growth of S.wolfei with butyrate, as part of the butyrate oxidation pathway. Probably catalyzes the hydration of crotonyl-CoA to 3-hydroxybutyryl-CoA. This is Crotonyl-CoA hydratase from Syntrophomonas wolfei subsp. wolfei (strain DSM 2245B / Goettingen).